The following is a 62-amino-acid chain: UPF0370 protein plu2724 (62 aa).

The chain crosses the membrane as a helical span at residues 3-23 (WLADYWWIILILLVGVLLNAI). Positions 36–62 (DNKPELPPHRDLNSKWDDEDDWPQKKP) are disordered.

Belongs to the UPF0370 family.

It localises to the cell membrane. This is UPF0370 protein plu2724 from Photorhabdus laumondii subsp. laumondii (strain DSM 15139 / CIP 105565 / TT01) (Photorhabdus luminescens subsp. laumondii).